The following is a 208-amino-acid chain: MLFTQLIILLTVTSQALSVTISDLNNIASNQVTKRLGGGSRGGSSSGSRGGSSSGSSSGSSSGSRGGSSSGSSSSGSRGGGSGSSSSSGSRNWGSNQYHCSGNSCGYGNYYAPSTAAAAVGYGTGRYTGGTQYGNNQYHCSGSTCGYGNYFAPSAAAAAAGYGSARYYAQHHNSTSSESETISGSSSLNIPSTHFYLIGFAAAYSIVL.

A signal peptide spans 1–18; it reads MLFTQLIILLTVTSQALS. Positions 33–93 are disordered; that stretch reads TKRLGGGSRG…SSSSSGSRNW (61 aa). A compositionally biased stretch (gly residues) spans 36 to 53; that stretch reads LGGGSRGGSSSGSRGGSS. Positions 54–63 are enriched in low complexity; sequence SGSSSGSSSG. N173 is a glycosylation site (N-linked (GlcNAc...) asparagine). The GPI-anchor amidated serine moiety is linked to residue S185. The propeptide at 186-208 is removed in mature form; that stretch reads SSLNIPSTHFYLIGFAAAYSIVL.

This sequence belongs to the PGA37 family.

It is found in the cell membrane. Its function is as follows. Predicted GPI-anchored protein which may have a role during host infection. The chain is Predicted GPI-anchored protein 37 (PGA37) from Candida albicans (strain SC5314 / ATCC MYA-2876) (Yeast).